The chain runs to 243 residues: Protein DMP8 (243 aa).

The disordered stretch occupies residues 1–37 (MEKTEESVGIRVYTTTTTQNPSPTSSRSPKPVPLSSL). Low complexity predominate over residues 14-29 (TTTTTQNPSPTSSRSP). 4 consecutive transmembrane segments (helical) span residues 70-90 (MLVN…LPTI), 98-118 (GINT…CFFF), 174-194 (VNDF…AFSD), and 212-232 (VMES…LVFP).

Belongs to the plant DMP1 protein family. Restricted to flowers.

It localises to the endoplasmic reticulum membrane. Its subcellular location is the vacuole membrane. Functionally, involved in membrane remodeling. The sequence is that of Protein DMP8 from Arabidopsis thaliana (Mouse-ear cress).